The sequence spans 433 residues: MRAEGLGGLERFCSPGKGRGLRALQPFQVGDLLFSCPAYAYVLTVNERGNHCEYCFTRKEGLSKCGRCKQAFYCNVECQKEDWPMHKLECSPMVVFGENWNPSETVRLTARILAKQKIHPERTPSEKLLAVKEFESHLDKLDNEKKDLIQSDIAALHHFYSKHLGFPDNDSLVVLFAQVNCNGFTIEDEELSHLGSAIFPDVALMNHSCCPNVIVTYKGTLAEVRAVQEIKPGEEVFTSYIDLLYPTEDRNDRLRDSYFFTCECQECTTKDKDKAKVEIRKLSDPPKAEAIRDMVRYARNVIEEFRRAKHYKSPSELLEICELSQEKMSSVFEDSNVYMLHMMYQAMGVCLYMQDWEGALQYGQKIIKPYSKHYPLYSLNVASMWLKLGRLYMGLEHKAAGEKALKKAIAIMEVAHGKDHPYISEIKQEIESH.

One can recognise an SET domain in the interval 7–241 (GGLERFCSPG…PGEEVFTSYI (235 aa)). Position 17–19 (17–19 (KGR)) interacts with S-adenosyl-L-methionine. The Zn(2+) site is built by Cys-52, Cys-55, Cys-65, Cys-68, Cys-74, Cys-78, His-86, and Cys-90. The MYND-type zinc-finger motif lies at 52–90 (CEYCFTRKEGLSKCGRCKQAFYCNVECQKEDWPMHKLEC). S-adenosyl-L-methionine-binding positions include His-137, 206-207 (NH), and 258-260 (YFF). Ser-283 is modified (phosphoserine).

Belongs to the class V-like SAM-binding methyltransferase superfamily. As to quaternary structure, interacts with RNA polymerase II and HELZ. Interacts with SIN3A and HDAC1. Interacts (via MYND-type zinc finger) with EPB41L3. Interacts (via SET domain) with p53/TP53. Interacts with RB1 and HSP90AA1.

Its subcellular location is the cytoplasm. The protein localises to the cytosol. It localises to the nucleus. The enzyme catalyses L-lysyl(4)-[histone H3] + 3 S-adenosyl-L-methionine = N(6),N(6),N(6)-trimethyl-L-lysyl(4)-[histone H3] + 3 S-adenosyl-L-homocysteine + 3 H(+). It catalyses the reaction L-lysyl-[protein] + S-adenosyl-L-methionine = N(6)-methyl-L-lysyl-[protein] + S-adenosyl-L-homocysteine + H(+). In terms of biological role, protein-lysine N-methyltransferase that methylates both histones and non-histone proteins, including p53/TP53 and RB1. Specifically trimethylates histone H3 'Lys-4' (H3K4me3) in vivo. The activity requires interaction with HSP90alpha. Shows even higher methyltransferase activity on p53/TP53. Monomethylates 'Lys-370' of p53/TP53, leading to decreased DNA-binding activity and subsequent transcriptional regulation activity of p53/TP53. Monomethylates RB1 at 'Lys-860'. This Homo sapiens (Human) protein is N-lysine methyltransferase SMYD2 (SMYD2).